We begin with the raw amino-acid sequence, 186 residues long: Elongation factor P (186 aa).

Belongs to the elongation factor P family.

The protein localises to the cytoplasm. It participates in protein biosynthesis; polypeptide chain elongation. Involved in peptide bond synthesis. Stimulates efficient translation and peptide-bond synthesis on native or reconstituted 70S ribosomes in vitro. Probably functions indirectly by altering the affinity of the ribosome for aminoacyl-tRNA, thus increasing their reactivity as acceptors for peptidyl transferase. This chain is Elongation factor P, found in Shewanella sp. (strain W3-18-1).